The primary structure comprises 72 residues: Translation initiation factor IF-1 (72 aa).

The region spanning 1 to 72 (MAKEDCIEME…TKGRIKFRSK (72 aa)) is the S1-like domain.

Belongs to the IF-1 family. In terms of assembly, component of the 30S ribosomal translation pre-initiation complex which assembles on the 30S ribosome in the order IF-2 and IF-3, IF-1 and N-formylmethionyl-tRNA(fMet); mRNA recruitment can occur at any time during PIC assembly.

It is found in the cytoplasm. One of the essential components for the initiation of protein synthesis. Stabilizes the binding of IF-2 and IF-3 on the 30S subunit to which N-formylmethionyl-tRNA(fMet) subsequently binds. Helps modulate mRNA selection, yielding the 30S pre-initiation complex (PIC). Upon addition of the 50S ribosomal subunit IF-1, IF-2 and IF-3 are released leaving the mature 70S translation initiation complex. This Francisella tularensis subsp. tularensis (strain FSC 198) protein is Translation initiation factor IF-1.